A 536-amino-acid chain; its full sequence is Probable tyrosyl-DNA phosphodiesterase (536 aa).

H122 functions as the Nucleophile in the catalytic mechanism. K124 lines the substrate pocket. Residues 315-318 are interaction with DNA; it reads SMGS. H401 serves as the catalytic Proton donor/acceptor. Residue K403 participates in substrate binding.

This sequence belongs to the tyrosyl-DNA phosphodiesterase family.

The protein resides in the nucleus. In terms of biological role, DNA repair enzyme that can remove a variety of covalent adducts from DNA through hydrolysis of a 3'-phosphodiester bond, giving rise to DNA with a free 3' phosphate. Catalyzes the hydrolysis of dead-end complexes between DNA and the topoisomerase I active site tyrosine residue. Hydrolyzes 3'-phosphoglycolates on protruding 3' ends on DNA double-strand breaks due to DNA damage by radiation and free radicals. Acts on blunt-ended double-strand DNA breaks and on single-stranded DNA. May have low 3'exonuclease activity and may be able to remove a single nucleoside from the 3'end of DNA and RNA molecules with 3'hydroxyl groups. Has no exonuclease activity towards DNA or RNA with a 3'phosphate. This is Probable tyrosyl-DNA phosphodiesterase from Schizosaccharomyces pombe (strain 972 / ATCC 24843) (Fission yeast).